Consider the following 206-residue polypeptide: Protein DEHYDRATION-INDUCED 19 (206 aa).

The residue at position 105 (Thr105) is a Phosphothreonine. The residue at position 107 (Ser107) is a Phosphoserine. A disordered region spans residues 142-167; sequence SSFISPTRSQSSPAPRQTKNVSEDKQ. Residues 143 to 161 are compositionally biased toward polar residues; it reads SFISPTRSQSSPAPRQTKN.

This sequence belongs to the Di19 family. Interacts with ADO2/LKP2, CPK11 and CPK4. Weak interaction with CPK12 and no interactions with CPK1, CPK5 or CPK26. Phosphorylated within the NLS/NES region. As to expression, expressed in seedlings, roots, leaves, stems, flowers and siliques.

It localises to the nucleus. The protein is Protein DEHYDRATION-INDUCED 19 (DI19-1) of Arabidopsis thaliana (Mouse-ear cress).